Here is a 462-residue protein sequence, read N- to C-terminus: MAYGWNGCGMGVQVNGSNGAIGLSSKYSRNTELRRVEDNDIYRLAKILDENSCWRKLMSIIPKGMDVQACSGAGCLNFPAEIKKGFKYTAQDVFQIDEAANRLPPDQSKSQMMIDEWKTSGKLNERPTVGVLLQLLVQAELFSAADFVALDFLNESTPARPVDGPGALISLELLEEEMEVDNEGLSLKYQSSTATLGADAQGSVGLNLDNFEKDIVRRDKSVPQPSGNTPPIAPPRRQQRSTTNSNFATLTGTGTTSTTIPNVPNLTILNPSEQIQEPVLQPRPMNIPDLSILISNSGDLRATVSDNPSNRTSSTDPPNIPRITLLIDNSGDVNSRPNHAPAKASTATTSTASSNNLPMISALNISKGSRETLRPESRSSSSSLSKDDDDDNDGEEDGEEEYPDAFLPNLSNSEQQSSNNDSSLTTVTGTSGDNSFELTNDSSSTSNDDYACNIPDLSELQQ.

Residues 27 to 152 (YSRNTELRRV…SAADFVALDF (126 aa)) form the Death domain. Residues 218 to 265 (RDKSVPQPSGNTPPIAPPRRQQRSTTNSNFATLTGTGTTSTTIPNVPN) form a disordered region. Residues 249–259 (TLTGTGTTSTT) show a composition bias toward low complexity. A run of 2 repeats spans residues 262–269 (NVPNLTIL) and 286–293 (NIPDLSIL). A 5 X approximate repeats region spans residues 262–460 (NVPNLTILNP…ACNIPDLSEL (199 aa)). Residues 301–317 (RATVSDNPSNRTSSTDP) are compositionally biased toward polar residues. The disordered stretch occupies residues 301 to 462 (RATVSDNPSN…NIPDLSELQQ (162 aa)). Repeat 3 spans residues 319–326 (NIPRITLL). Low complexity predominate over residues 342 to 354 (AKASTATTSTASS). Residues 355–367 (NNLPMISALNISK) are compositionally biased toward polar residues. The stretch at 356-363 (NLPMISAL) is repeat 4. Over residues 368–377 (GSRETLRPES) the composition is skewed to basic and acidic residues. Residues 387–403 (DDDDDNDGEEDGEEEYP) show a composition bias toward acidic residues. The segment covering 409 to 424 (NLSNSEQQSSNNDSSL) has biased composition (low complexity). Residues 425–438 (TTVTGTSGDNSFEL) show a composition bias toward polar residues. Residues 439–449 (TNDSSSTSNDD) show a composition bias toward low complexity. The stretch at 453 to 460 (NIPDLSEL) is repeat 5.

As to quaternary structure, interacts (via Death domain) with pll (via Death domain). Post-translationally, phosphorylated by pll.

The protein localises to the cytoplasm. It is found in the cell membrane. Plays an essential role in the Tl receptor signaling pathway that establishes embryonic dorsoventral polarity; the signal directs import of dl into ventral and ventrolateral nuclei, thereby establishing dorsoventral polarity. Tub recruits pll to the plasma membrane and protein-protein interaction activates pll. Also has a role in pupal pattern formation. This Drosophila melanogaster (Fruit fly) protein is Protein Tube (tub).